The following is a 417-amino-acid chain: Probable dihydrofolate synthetase (417 aa).

An ATP-binding site is contributed by 34 to 37; sequence GKGS. Mg(2+) contacts are provided by serine 58, glutamate 123, and histidine 151. The ATP site is built by arginine 274 and aspartate 289.

This sequence belongs to the folylpolyglutamate synthase family.

The enzyme catalyses 7,8-dihydropteroate + L-glutamate + ATP = 7,8-dihydrofolate + ADP + phosphate + H(+). It participates in cofactor biosynthesis; tetrahydrofolylpolyglutamate biosynthesis. Functionally, glutamate-adding enzyme which catalyzes the binding of the first glutamyl side chain to dihydropteroate. Leads to the de nove synthesis of tetrahydrofolate. de novo. This chain is Probable dihydrofolate synthetase (fol3), found in Schizosaccharomyces pombe (strain 972 / ATCC 24843) (Fission yeast).